The following is a 307-amino-acid chain: Small ribosomal subunit biogenesis GTPase RsgA (307 aa).

In terms of domain architecture, CP-type G spans 82–240 (GRYGERIVVA…IADTPGLREV (159 aa)). GTP is bound by residues 131-134 (NKAD) and 182-190 (GPSGVGKSS). Zn(2+) is bound by residues Cys-264, Cys-269, His-271, and Cys-277.

This sequence belongs to the TRAFAC class YlqF/YawG GTPase family. RsgA subfamily. As to quaternary structure, monomer. Associates with 30S ribosomal subunit, binds 16S rRNA. It depends on Zn(2+) as a cofactor.

Its subcellular location is the cytoplasm. In terms of biological role, one of several proteins that assist in the late maturation steps of the functional core of the 30S ribosomal subunit. Helps release RbfA from mature subunits. May play a role in the assembly of ribosomal proteins into the subunit. Circularly permuted GTPase that catalyzes slow GTP hydrolysis, GTPase activity is stimulated by the 30S ribosomal subunit. This is Small ribosomal subunit biogenesis GTPase RsgA from Gemmatimonas aurantiaca (strain DSM 14586 / JCM 11422 / NBRC 100505 / T-27).